Consider the following 122-residue polypeptide: Large ribosomal subunit protein bL12 (122 aa).

The protein belongs to the bacterial ribosomal protein bL12 family. As to quaternary structure, homodimer. Part of the ribosomal stalk of the 50S ribosomal subunit. Forms a multimeric L10(L12)X complex, where L10 forms an elongated spine to which 2 to 4 L12 dimers bind in a sequential fashion. Binds GTP-bound translation factors.

Its function is as follows. Forms part of the ribosomal stalk which helps the ribosome interact with GTP-bound translation factors. Is thus essential for accurate translation. In Aliivibrio fischeri (strain ATCC 700601 / ES114) (Vibrio fischeri), this protein is Large ribosomal subunit protein bL12.